Consider the following 428-residue polypeptide: Histidine--tRNA ligase (428 aa).

This sequence belongs to the class-II aminoacyl-tRNA synthetase family. Homodimer.

Its subcellular location is the cytoplasm. The enzyme catalyses tRNA(His) + L-histidine + ATP = L-histidyl-tRNA(His) + AMP + diphosphate + H(+). The sequence is that of Histidine--tRNA ligase from Mesomycoplasma hyopneumoniae (strain 7448) (Mycoplasma hyopneumoniae).